The sequence spans 62 residues: Large ribosomal subunit protein uL29 (62 aa).

It belongs to the universal ribosomal protein uL29 family.

In Oleidesulfovibrio alaskensis (strain ATCC BAA-1058 / DSM 17464 / G20) (Desulfovibrio alaskensis), this protein is Large ribosomal subunit protein uL29.